Reading from the N-terminus, the 570-residue chain is Nucleoprotein (570 aa).

The tract at residues 54-241 is binding site for the cap structure m7GTP; that stretch reads MRKDKRNDSD…IDVSKSSINV (188 aa). The interval 342–361 is disordered; sequence IDLSQNKQMSPAKPKGAGHG. Residues aspartate 390 and glutamate 392 each coordinate Mn(2+). Positions 400, 507, 510, and 530 each coordinate Zn(2+). Aspartate 534 contacts Mn(2+).

This sequence belongs to the arenaviridae nucleocapsid protein family. In terms of assembly, homomultimerizes to form the nucleocapsid. Binds to viral genomic RNA. Interacts with glycoprotein G2. Interacts with protein Z; this interaction probably directs the encapsidated genome to budding sites. Interacts with protein L; this interaction does not interfere with Z-L interaction. Interacts with host IKBKE (via Protein kinase domain); the interaction inhibits IKBKE kinase activity.

The protein localises to the virion. Its subcellular location is the host cytoplasm. Encapsidates the genome, protecting it from nucleases. The encapsidated genomic RNA is termed the nucleocapsid (NC). Serves as template for viral transcription and replication. The increased presence of protein N in host cell does not seem to trigger the switch from transcription to replication as observed in other negative strain RNA viruses. Through the interaction with host IKBKE, strongly inhibits the phosphorylation and nuclear translocation of host IRF3, a protein involved in interferon activation pathway, leading to the inhibition of interferon-beta and IRF3-dependent promoters activation. Also encodes a functional 3'-5' exoribonuclease that degrades preferentially dsRNA substrates and thereby participates in the suppression of interferon induction. In Praomys (African soft-furred rats), this protein is Nucleoprotein.